The following is a 512-amino-acid chain: MKSKKQTKLLLILDGWGYSKTTKNNAIALANTSVWDRLNQTFPHSLIHTSGKDVGLPGKQMGNSEVGHLNLGAGRIVKQDFTRIYNELQNGDFFRNPILRNSLEYANDNNKAIHIMGLLSDGGVHSHEEQIHAMLEMTSRQGCKNVYLHIFTDGRDCAQKSAKKYIKKLESKMKELNTGEIVSLIGRYFSMDRDNRWSRIRYAYELIAKGKAKFLAKSALNAIELAYARGETDEFIQSTSIKAPTSIKKGDVLILMNYRADRARQITCAFTDEDFQGFSRGTFVPTQFVCLTEYKKDFNLPVAYPSSKLNNVLGKYLSNLGMTQLRIAETEKYAHVTFFLNGGIEQAFNGEERVLIPSPDVATYDLQPEMSAFELTDALVENIESQKYDLIICNFANTDMVGHSGKLDATIKAVEAVDTCLGIIYKAMFAIGGEMLITADHGNAEQMINPQTNEVHTAHTNNPVPLIFVSNRKADIMKPGKGALSDIAPTLLAMMDIEKPDEMTGNSLLTFK.

2 residues coordinate Mn(2+): Asp14 and Ser64. Residue Ser64 is the Phosphoserine intermediate of the active site. Substrate contacts are provided by residues His125, 155-156, Arg187, Arg193, 259-262, and Lys332; these read RD and RADR. Residues Asp399, His403, Asp440, His441, and His459 each coordinate Mn(2+).

The protein belongs to the BPG-independent phosphoglycerate mutase family. In terms of assembly, monomer. Requires Mn(2+) as cofactor.

It catalyses the reaction (2R)-2-phosphoglycerate = (2R)-3-phosphoglycerate. It participates in carbohydrate degradation; glycolysis; pyruvate from D-glyceraldehyde 3-phosphate: step 3/5. Functionally, catalyzes the interconversion of 2-phosphoglycerate and 3-phosphoglycerate. In Vesicomyosocius okutanii subsp. Calyptogena okutanii (strain HA), this protein is 2,3-bisphosphoglycerate-independent phosphoglycerate mutase.